A 445-amino-acid chain; its full sequence is Adenine permease AdeP (445 aa).

Residues 1 to 28 are Cytoplasmic-facing; the sequence is MSHQHTTQTSGQGMLERVFKLREHGTTA. Residues 29–52 traverse the membrane as a helical segment; it reads RTEVIAGFTTFLTMVYIVFVNPQI. The Periplasmic segment spans residues 53 to 62; that stretch reads LGVAGMDTSA. The chain crosses the membrane as a helical span at residues 63–81; the sequence is VFVTTCLIAAFGSIMMGLF. Over 82–83 the chain is Cytoplasmic; it reads AN. The discontinuously helical transmembrane segment at 84–100 threads the bilayer; the sequence is LPVALAPAMGLNAFFAF. Residues 101 to 112 lie on the Periplasmic side of the membrane; sequence VVVQAMGLPWQV. A helical membrane pass occupies residues 113–132; that stretch reads GMGAIFWGAIGLLLLTIFRV. At 133–144 the chain is on the cytoplasmic side; sequence RYWMIANIPVSL. The chain crosses the membrane as a helical span at residues 145-165; that stretch reads RVGITSGIGLFIGMMGLKNAG. Over 166-181 the chain is Periplasmic; sequence VIVANPETLVSIGNLT. A helical membrane pass occupies residues 182–199; the sequence is SHSVLLGILGFFIIAILA. Topologically, residues 200 to 203 are cytoplasmic; sequence SRNI. A helical membrane pass occupies residues 204 to 222; that stretch reads HAAVLVSIVVTTLLGWMLG. Residues 223 to 250 are Periplasmic-facing; sequence DVHYNGIVSAPPSVMTVVGHVDLAGSFN. Residues 251–279 traverse the membrane as a helical segment; sequence LGLAGVIFSFMLVNLFDSSGTLIGVTDKA. Residues 280–292 lie on the Cytoplasmic side of the membrane; sequence GLADEKGKFPRMK. The helical transmembrane segment at 293 to 308 threads the bilayer; sequence QALYVDSISSVTGSFI. At 309–310 the chain is on the periplasmic side; the sequence is GT. A discontinuously helical transmembrane segment spans residues 311–326; that stretch reads SSVTAYIESSSGVSVG. Residues 327–330 are Cytoplasmic-facing; it reads GRTG. The helical transmembrane segment at 331–345 threads the bilayer; the sequence is LTAVVVGLLFLLVIF. The Periplasmic segment spans residues 346–356; sequence LSPLAGMVPGY. The helical transmembrane segment at 357 to 376 threads the bilayer; the sequence is AAAGALIYVGVLMTSSLARV. The Cytoplasmic segment spans residues 377–381; it reads NWQDL. Positions 382–417 form an intramembrane region, discontinuously helical; it reads TESVPAFITAVMMPFSFSITEGIALGFISYCVMKIG. Residues 418–445 are Cytoplasmic-facing; sequence TGRLRDLSPCVIIVALLFILKIVFIDAH.

Belongs to the nucleobase:cation symporter-2 (NCS2) (TC 2.A.40) family. Azg-like subfamily.

The protein localises to the cell inner membrane. With respect to regulation, internal adenine may inhibit transport. Its function is as follows. High-affinity transporter for adenine. The sequence is that of Adenine permease AdeP (adeP) from Escherichia coli (strain K12).